The following is a 717-amino-acid chain: uncharacterized protein (717 aa).

This sequence belongs to the asfivirus C717R family.

It is found in the virion. This is an uncharacterized protein from African swine fever virus (isolate Tick/Malawi/Lil 20-1/1983) (ASFV).